We begin with the raw amino-acid sequence, 560 residues long: NAD(P)H-quinone oxidoreductase chain 4-3 (560 aa).

The next 14 helical transmembrane spans lie at 5–25 (FPWL…IPLL), 35–55 (WYAL…FWHH), 86–106 (ISMP…LAAW), 114–134 (LFYF…VAQD), 135–155 (LLLF…LVSI), 168–188 (FLLY…AMAL), 208–228 (ALEL…LAIF), 242–262 (SAPV…YGLI), 273–293 (HIYF…YGGL), 310–330 (VSHM…GVSG), 331–351 (AMLQ…LAGV), 374–394 (VFAL…MSGF), 417–437 (VMVF…LSML), and 488–508 (VFIA…PKIA).

The protein belongs to the complex I subunit 4 family.

The protein localises to the cellular thylakoid membrane. The enzyme catalyses a plastoquinone + NADH + (n+1) H(+)(in) = a plastoquinol + NAD(+) + n H(+)(out). It carries out the reaction a plastoquinone + NADPH + (n+1) H(+)(in) = a plastoquinol + NADP(+) + n H(+)(out). NDH-1 shuttles electrons from NAD(P)H, via FMN and iron-sulfur (Fe-S) centers, to quinones in the respiratory chain. The immediate electron acceptor for the enzyme in this species is believed to be plastoquinone. Couples the redox reaction to proton translocation (for every two electrons transferred, four hydrogen ions are translocated across the cytoplasmic membrane), and thus conserves the redox energy in a proton gradient. The protein is NAD(P)H-quinone oxidoreductase chain 4-3 (ndhD3) of Nostoc sp. (strain PCC 7120 / SAG 25.82 / UTEX 2576).